Consider the following 156-residue polypeptide: S-ribosylhomocysteine lyase (156 aa).

The Fe cation site is built by His-56, His-60, and Cys-123.

This sequence belongs to the LuxS family. In terms of assembly, homodimer. It depends on Fe cation as a cofactor.

The catalysed reaction is S-(5-deoxy-D-ribos-5-yl)-L-homocysteine = (S)-4,5-dihydroxypentane-2,3-dione + L-homocysteine. Its function is as follows. Involved in the synthesis of autoinducer 2 (AI-2) which is secreted by bacteria and is used to communicate both the cell density and the metabolic potential of the environment. The regulation of gene expression in response to changes in cell density is called quorum sensing. Catalyzes the transformation of S-ribosylhomocysteine (RHC) to homocysteine (HC) and 4,5-dihydroxy-2,3-pentadione (DPD). The sequence is that of S-ribosylhomocysteine lyase from Staphylococcus aureus (strain bovine RF122 / ET3-1).